The chain runs to 156 residues: Cyanate hydratase (156 aa).

Catalysis depends on residues Arg-96, Glu-99, and Ser-122.

The protein belongs to the cyanase family.

It carries out the reaction cyanate + hydrogencarbonate + 3 H(+) = NH4(+) + 2 CO2. Its function is as follows. Catalyzes the reaction of cyanate with bicarbonate to produce ammonia and carbon dioxide. The chain is Cyanate hydratase from Burkholderia lata (strain ATCC 17760 / DSM 23089 / LMG 22485 / NCIMB 9086 / R18194 / 383).